Here is a 1420-residue protein sequence, read N- to C-terminus: Vacuolar protein sorting/targeting protein 10 (1420 aa).

A signal peptide spans 1-21 (MILRRLLLAGSLLLATAFTSA). Residues 22-1284 (KKADGPKISV…FFKKHPRLRG (1263 aa)) lie on the Lumenal side of the membrane. A BNR 1 repeat occupies 61–71 (YVSRDAGANWD). 2 N-linked (GlcNAc...) asparagine glycosylation sites follow: N271 and N321. BNR repeat units lie at residues 377-386 (ISFDDGRTFQ) and 644-654 (FLSRDHGKKWK). N893 carries an N-linked (GlcNAc...) asparagine glycan. 2 BNR repeats span residues 1028–1038 (FITRDAGITWE) and 1070–1079 (YSLDEGRSWK). Residues 1285–1305 (IGLFFVILIPICLAATAGYYV) form a helical membrane-spanning segment. Topologically, residues 1306-1331 (YNHWDGKFGRIRLGETGSGGLFDRDS) are cytoplasmic. The helical transmembrane segment at 1332–1352 (LLVSIPVSMVAGVVAVITALP) threads the bilayer. The Lumenal portion of the chain corresponds to 1353 to 1420 (LLVSSLWRSV…EEGDERNGQV (68 aa)). The segment covering 1397 to 1414 (DEDELLGTDDFDDDEEGD) has biased composition (acidic residues). Positions 1397-1420 (DEDELLGTDDFDDDEEGDERNGQV) are disordered.

The protein belongs to the VPS10-related sortilin family.

It localises to the golgi apparatus. The protein resides in the trans-Golgi network membrane. The protein localises to the prevacuolar compartment membrane. Functionally, functions as a sorting receptor in the Golgi compartment required for the intracellular sorting and delivery of soluble vacuolar proteins, like carboxypeptidase Y (CPY) and proteinase A. Executes multiple rounds of sorting by cycling between the late Golgi and a prevacuolar endosome-like compartment. In Ajellomyces capsulatus (strain H143) (Darling's disease fungus), this protein is Vacuolar protein sorting/targeting protein 10 (VPS10).